The chain runs to 105 residues: Heat shock protein HspQ (105 aa).

This sequence belongs to the HspQ family.

Its subcellular location is the cytoplasm. Its function is as follows. Involved in the degradation of certain denaturated proteins, including DnaA, during heat shock stress. The sequence is that of Heat shock protein HspQ from Klebsiella pneumoniae (strain 342).